Reading from the N-terminus, the 285-residue chain is Probable enoyl-CoA hydratase echA12 (285 aa).

This sequence belongs to the enoyl-CoA hydratase/isomerase family.

The catalysed reaction is a (3S)-3-hydroxyacyl-CoA = a (2E)-enoyl-CoA + H2O. It carries out the reaction a 4-saturated-(3S)-3-hydroxyacyl-CoA = a (3E)-enoyl-CoA + H2O. Could possibly oxidize fatty acids using specific components. The protein is Probable enoyl-CoA hydratase echA12 (echA12) of Mycobacterium bovis (strain ATCC BAA-935 / AF2122/97).